The sequence spans 91 residues: Potassium channel toxin BuTXK-beta (91 aa).

The N-terminal stretch at 1-20 (MQRNLVVLLLLGMVALSSCG) is a signal peptide. Residues 21–27 (LREKHFQ) constitute a propeptide that is removed on maturation. The 38-residue stretch at 54-91 (QFGCPAYQGYCDDHCQDIKKEEGFCHGMKCKCGIPMGF) folds into the BetaSPN-type CS-alpha/beta domain. Disulfide bonds link cysteine 57–cysteine 78, cysteine 64–cysteine 83, and cysteine 68–cysteine 85.

This sequence belongs to the long chain scorpion toxin family. Class 1 subfamily. As to expression, expressed by the venom gland.

The protein localises to the secreted. Inhibits voltage-gated potassium channel. This chain is Potassium channel toxin BuTXK-beta, found in Buthus israelis (Israeli scorpion).